Reading from the N-terminus, the 231-residue chain is MNRLLSLFALGGAVLLAGCVAPTAKPNDPYYAPVLPRTPLPAAANNGSIYQAGFEQNLYSDRKAFRVGDIITITLNERTSASKNAGSQIQKDSSANIGLTSLFGATPSTNNPFGSGDLSLEAGYSGERATKGDSKATQGNTLTGSITVTVAEVLPNGIIAVRGEKWMTLNTGEELVRIAGLIRADDIATDNTVPSTRVADARITYSGTGSFADASQPGWLDRFFLSPLWPF.

An N-terminal signal peptide occupies residues 1 to 18 (MNRLLSLFALGGAVLLAG). A lipid anchor (N-palmitoyl cysteine) is attached at cysteine 19. Cysteine 19 carries the S-diacylglycerol cysteine lipid modification.

It belongs to the FlgH family. As to quaternary structure, the basal body constitutes a major portion of the flagellar organelle and consists of four rings (L,P,S, and M) mounted on a central rod.

The protein resides in the cell outer membrane. It is found in the bacterial flagellum basal body. Functionally, assembles around the rod to form the L-ring and probably protects the motor/basal body from shearing forces during rotation. The polypeptide is Flagellar L-ring protein (Pseudomonas putida (strain W619)).